The following is a 182-amino-acid chain: NADH-quinone oxidoreductase subunit B (182 aa).

[4Fe-4S] cluster-binding residues include cysteine 61, cysteine 62, cysteine 126, and cysteine 156.

It belongs to the complex I 20 kDa subunit family. As to quaternary structure, NDH-1 is composed of 14 different subunits. Subunits NuoB, C, D, E, F, and G constitute the peripheral sector of the complex. The cofactor is [4Fe-4S] cluster.

Its subcellular location is the cell inner membrane. The catalysed reaction is a quinone + NADH + 5 H(+)(in) = a quinol + NAD(+) + 4 H(+)(out). In terms of biological role, NDH-1 shuttles electrons from NADH, via FMN and iron-sulfur (Fe-S) centers, to quinones in the respiratory chain. The immediate electron acceptor for the enzyme in this species is believed to be ubiquinone. Couples the redox reaction to proton translocation (for every two electrons transferred, four hydrogen ions are translocated across the cytoplasmic membrane), and thus conserves the redox energy in a proton gradient. This Xanthomonas oryzae pv. oryzae (strain PXO99A) protein is NADH-quinone oxidoreductase subunit B.